We begin with the raw amino-acid sequence, 487 residues long: MTITFQDFQLSSDLTKAIKRMGFEEATPIQAQTIPLGLANKDVIGQAQTGTGKTAAFGIPLVEKINPESPNIQAIVIAPTRELAIQVSEELYKIGQDKRARVLPIYGGQDIGRQIRALKKNPHIIVGTPGRLLDHINRRTMRLQTVNTVVLDEADEMLNMGFIEDIESILSNVPAEHQTLLFSATMPAPIKRIAERFMTNPEHVKVKAKEMTVSNIQQFYLEVHERKKFDTLTRLLDIQSPELAIVFGRTKRRVDELTEALNLRGYTAEGIHGDLTQAKRMVALRKFKQGAIEVLVATDVAARGLDISGVTHVYNFDVPQDPESYVHRIGRTGRAGKTGMAMTFITPREKDMLRAIEQTTKRKMDRMKAPTLDEAIEGQQQVTVDRIRTIIEENNLNFYMTAAAELLEDHDSVTVVAAAIKMMTKEPDNTPVRLTEEAPLRTKRNKNHHHRSSKRRDGGGYRGKNNRSSYDKKRSSNDRRQKKSYNS.

The Q motif motif lies at 3-31 (ITFQDFQLSSDLTKAIKRMGFEEATPIQA). The Helicase ATP-binding domain occupies 34–204 (IPLGLANKDV…ERFMTNPEHV (171 aa)). An ATP-binding site is contributed by 47–54 (AQTGTGKT). Residues 152–155 (DEAD) carry the DEAD box motif. A Helicase C-terminal domain is found at 215 to 375 (NIQQFYLEVH…RMKAPTLDEA (161 aa)). Residues 428–440 (DNTPVRLTEEAPL) are compositionally biased toward basic and acidic residues. The segment at 428–487 (DNTPVRLTEEAPLRTKRNKNHHHRSSKRRDGGGYRGKNNRSSYDKKRSSNDRRQKKSYNS) is disordered. Over residues 441-454 (RTKRNKNHHHRSSK) the composition is skewed to basic residues. Basic and acidic residues predominate over residues 469-479 (SYDKKRSSNDR).

This sequence belongs to the DEAD box helicase family. CshA subfamily. In terms of assembly, oligomerizes, may be a member of the RNA degradosome.

Its subcellular location is the cytoplasm. The catalysed reaction is ATP + H2O = ADP + phosphate + H(+). In terms of biological role, DEAD-box RNA helicase possibly involved in RNA degradation. Unwinds dsRNA in both 5'- and 3'-directions, has RNA-dependent ATPase activity. The sequence is that of DEAD-box ATP-dependent RNA helicase CshA from Bacillus licheniformis (strain ATCC 14580 / DSM 13 / JCM 2505 / CCUG 7422 / NBRC 12200 / NCIMB 9375 / NCTC 10341 / NRRL NRS-1264 / Gibson 46).